A 130-amino-acid polypeptide reads, in one-letter code: Small ribosomal subunit protein uS9 (130 aa).

This sequence belongs to the universal ribosomal protein uS9 family.

This Verminephrobacter eiseniae (strain EF01-2) protein is Small ribosomal subunit protein uS9.